The following is an 826-amino-acid chain: MSDVVLLVLAIIFIIIFVLIYCTIFFEFDETTFSKRLHVLTEYAKRTNAEHPTPDVLGHVSDVYEHTYIVTWFNTNDLSVYHETVHDDTIEVFDFLEQKFSPAKSTVAQRVAPSASDPNAFVLTGDKSEVKMHCPQHFNFDYNQLKCVPINPCDTRAPGLYAMDEHLLDALVHSQHLDKDYTINAHLQHPTLYLRCLADGSYVVQECPDNYTFDAATSECKVNELCQGRPDGYVLDYFPETLLVNEFVECYESKHVVKQCPEQHVFDRQLMTCVQAHPCAFNGAGHTYITADIGDTQYFECLNNQESQLITCINRVRNTDGQYACSGDARCANLTDGTGQLVHMHVDDTFEYASGQLVCDNFEVISEIDCNTSDVLTNMLFLQKFKLETEFPRQVFDNGECVPATFNNVRVLNDTFPIQNVPNDYNIDMQTSIIGLTDMIPKLLAGDDLDDTFGQNVVLARDVGAVGLNPVTAEPIDCLGTQLFDVLDASRANICTESGDGVLKTLKFENGTFLSVFRDNLTGSDIDYKRFCAISYENSLKIVKSDHFERRILTNILQSDVCADLYTTMYQKYTTLARKYTTTPFQYTYTFVKPPPNIVVYAKNIQLKNATISKPAFDPFANKQIDNKNNLAKPLFDPFKNAVWYSEPDGGDGDHWGPDLPPPVQPDSEPDESEPEPEVSPLILDKKDLFYSCYYELPSFKLTSCYAENDVIIDAITDLRNNVTVDAECEPAKDLHYVLNAYAYTGNGVGCRSVFNDDGVAVIKEPIPSYVFANLNTQSNDGVHYNRHVHVKDGRYMACPDHLYDDVEFRCNVEADKLYYLDNMQF.

The signal sequence occupies residues 1–18 (MSDVVLLVLAIIFIIIFV). The C2HC BV-type zinc finger occupies 147–196 (CVPINPCDTRAPGLYAMDEHLLDALVHSQHLDKDYTINAHLQHPTLYLRC). 2 cysteine pairs are disulfide-bonded: C207–C220 and C260–C273. N-linked (GlcNAc...) asparagine; by host glycosylation occurs at N210. In terms of domain architecture, Chitin-binding type-2 spans 223–281 (NELCQGRPDGYVLDYFPETLLVNEFVECYESKHVVKQCPEQHVFDRQLMTCVQAHPCAF). 6 N-linked (GlcNAc...) asparagine; by host glycosylation sites follow: N333, N371, N413, N510, N520, and N609. The segment at 651–679 (GDGDHWGPDLPPPVQPDSEPDESEPEPEV) is disordered. A compositionally biased stretch (acidic residues) spans 668–677 (SEPDESEPEP). An N-linked (GlcNAc...) asparagine; by host glycan is attached at N722.

The protein localises to the virion. Probable capsid-associated protein. The protein is Capsid-associated protein Vp91 of Epiphyas postvittana nucleopolyhedrovirus (EppoMNPV).